Reading from the N-terminus, the 293-residue chain is 4-hydroxy-tetrahydrodipicolinate synthase (293 aa).

A pyruvate-binding site is contributed by T46. Y133 (proton donor/acceptor) is an active-site residue. K161 (schiff-base intermediate with substrate) is an active-site residue. Residue V202 coordinates pyruvate.

It belongs to the DapA family. As to quaternary structure, homotetramer; dimer of dimers.

It localises to the cytoplasm. The enzyme catalyses L-aspartate 4-semialdehyde + pyruvate = (2S,4S)-4-hydroxy-2,3,4,5-tetrahydrodipicolinate + H2O + H(+). Its pathway is amino-acid biosynthesis; L-lysine biosynthesis via DAP pathway; (S)-tetrahydrodipicolinate from L-aspartate: step 3/4. Functionally, catalyzes the condensation of (S)-aspartate-beta-semialdehyde [(S)-ASA] and pyruvate to 4-hydroxy-tetrahydrodipicolinate (HTPA). In Wolbachia pipientis subsp. Culex pipiens (strain wPip), this protein is 4-hydroxy-tetrahydrodipicolinate synthase.